Here is a 106-residue protein sequence, read N- to C-terminus: Immunoglobulin lambda constant 6 (106 aa).

The region spanning 7–101 (PSVTLFPPSS…EGSTVEKTVA (95 aa)) is the Ig-like domain. C28 and C87 are joined by a disulfide.

As to quaternary structure, immunoglobulins are composed of two identical heavy chains and two identical light chains; disulfide-linked.

It is found in the secreted. The protein localises to the cell membrane. In terms of biological role, constant region of immunoglobulin light chains. Immunoglobulins, also known as antibodies, are membrane-bound or secreted glycoproteins produced by B lymphocytes. In the recognition phase of humoral immunity, the membrane-bound immunoglobulins serve as receptors which, upon binding of a specific antigen, trigger the clonal expansion and differentiation of B lymphocytes into immunoglobulins-secreting plasma cells. Secreted immunoglobulins mediate the effector phase of humoral immunity, which results in the elimination of bound antigens. The antigen binding site is formed by the variable domain of one heavy chain, together with that of its associated light chain. Thus, each immunoglobulin has two antigen binding sites with remarkable affinity for a particular antigen. The variable domains are assembled by a process called V-(D)-J rearrangement and can then be subjected to somatic hypermutations which, after exposure to antigen and selection, allow affinity maturation for a particular antigen. The sequence is that of Immunoglobulin lambda constant 6 from Homo sapiens (Human).